A 371-amino-acid polypeptide reads, in one-letter code: Galanin receptor type 2 (371 aa).

Topologically, residues 1–27 are extracellular; sequence MNGSDSQGAEDSSQEGGGGWQPEAVLV. The N-linked (GlcNAc...) asparagine glycan is linked to Asn-2. A helical membrane pass occupies residues 28 to 48; the sequence is PLFFALIFLVGAVGNALVLAV. Residues 49–59 are Cytoplasmic-facing; the sequence is LLRGGQAVSTT. A helical transmembrane segment spans residues 60–80; that stretch reads NLFILNLGVADLCFILCCVPF. Residues 81–98 are Extracellular-facing; the sequence is QATIYTLDDWVFGSLLCK. A disulfide bridge links Cys-97 with Cys-174. A helical transmembrane segment spans residues 99 to 120; that stretch reads AVHFLIFLTMHASSFTLAAVSL. Residues 121 to 140 lie on the Cytoplasmic side of the membrane; sequence DRYLAIRYPLHSRELRTPRN. A helical membrane pass occupies residues 141-161; the sequence is ALAAIGLIWGLALLFSGPYLS. The Extracellular segment spans residues 162-186; the sequence is YYSQSQLANLTVCHPAWSAPRRRAM. A helical membrane pass occupies residues 187–207; it reads DLCTFVFSYLLPVLVLSLTYA. The Cytoplasmic segment spans residues 208–236; that stretch reads RTLHYLWRTVDPVAAGSGSQRAKRKVTRM. Residues 237–257 form a helical membrane-spanning segment; that stretch reads IVIVAVLFCLCWMPHHALILC. Residues 258-259 are Extracellular-facing; that stretch reads VW. Residues 260–280 traverse the membrane as a helical segment; it reads FGRFPLTRATYALRILSHLVS. At 281–371 the chain is on the cytoplasmic side; that stretch reads YANSCVNPIV…TLSRTLDPAC (91 aa).

This sequence belongs to the G-protein coupled receptor 1 family.

It localises to the cell membrane. Receptor for the hormone galanin, GALP and spexin-1. The activity of this receptor is mediated by G proteins that activate the phospholipase C/protein kinase C pathway (via G(q)) and that inhibit adenylyl cyclase (via G(i)). This is Galanin receptor type 2 (Galr2) from Mus musculus (Mouse).